The primary structure comprises 210 residues: MATIAIIDYGMGNLRSVQKGFEKVGFEAVVTADPKVVLEAEKVVLPGVGAFRDCMRNLEQGGFVEPILTVIQDGRPFLGICVGMQLLFTDSVEFGLYQGLNVIPGHVLRFPEGMRERGEDLKVPHMGWNQLSIKRRPSAFSDVEDGANVYFVHSFYAKPDEEGVVAATSSYGIDFCAAVWKDNIVATQFHPEKSQAVGLSILKNFALSKA.

The Glutamine amidotransferase type-1 domain occupies 3-210 (TIAIIDYGMG…ILKNFALSKA (208 aa)). C81 functions as the Nucleophile in the catalytic mechanism. Catalysis depends on residues H190 and E192.

In terms of assembly, heterodimer of HisH and HisF.

It localises to the cytoplasm. The enzyme catalyses 5-[(5-phospho-1-deoxy-D-ribulos-1-ylimino)methylamino]-1-(5-phospho-beta-D-ribosyl)imidazole-4-carboxamide + L-glutamine = D-erythro-1-(imidazol-4-yl)glycerol 3-phosphate + 5-amino-1-(5-phospho-beta-D-ribosyl)imidazole-4-carboxamide + L-glutamate + H(+). The catalysed reaction is L-glutamine + H2O = L-glutamate + NH4(+). It participates in amino-acid biosynthesis; L-histidine biosynthesis; L-histidine from 5-phospho-alpha-D-ribose 1-diphosphate: step 5/9. In terms of biological role, IGPS catalyzes the conversion of PRFAR and glutamine to IGP, AICAR and glutamate. The HisH subunit catalyzes the hydrolysis of glutamine to glutamate and ammonia as part of the synthesis of IGP and AICAR. The resulting ammonia molecule is channeled to the active site of HisF. The sequence is that of Imidazole glycerol phosphate synthase subunit HisH from Geobacter metallireducens (strain ATCC 53774 / DSM 7210 / GS-15).